The chain runs to 201 residues: ATP-dependent Clp protease proteolytic subunit (201 aa).

Ser100 acts as the Nucleophile in catalysis. His125 is a catalytic residue.

The protein belongs to the peptidase S14 family. As to quaternary structure, component of the chloroplastic Clp protease core complex.

Its subcellular location is the plastid. The protein resides in the chloroplast stroma. The catalysed reaction is Hydrolysis of proteins to small peptides in the presence of ATP and magnesium. alpha-casein is the usual test substrate. In the absence of ATP, only oligopeptides shorter than five residues are hydrolyzed (such as succinyl-Leu-Tyr-|-NHMec, and Leu-Tyr-Leu-|-Tyr-Trp, in which cleavage of the -Tyr-|-Leu- and -Tyr-|-Trp bonds also occurs).. In terms of biological role, cleaves peptides in various proteins in a process that requires ATP hydrolysis. Has a chymotrypsin-like activity. Plays a major role in the degradation of misfolded proteins. In Ranunculus macranthus (Large buttercup), this protein is ATP-dependent Clp protease proteolytic subunit.